The sequence spans 54 residues: MKIFFAILLILAVCSMAIWTVNGTPFAIRCKTDSDCSYKCPGNPPCRNGFCKCT.

The signal sequence occupies residues 1 to 23 (MKIFFAILLILAVCSMAIWTVNG). Cystine bridges form between cysteine 30-cysteine 46, cysteine 36-cysteine 51, and cysteine 40-cysteine 53.

It belongs to the short scorpion toxin superfamily. Potassium channel inhibitor family. Alpha-KTx 14 subfamily. As to expression, expressed by the venom gland.

The protein resides in the secreted. Its function is as follows. Inhibits potassium channels. May be active towards small conductance calcium-activated potassium channels (KCNN, SK), and less active towards voltage-gated potassium channels (Kv/KCN). The sequence is that of Potassium channel toxin alpha-KTx 14.5 from Mesobuthus gibbosus (Mediterranean checkered scorpion).